The sequence spans 79 residues: Acyl carrier protein (79 aa).

Residues 2–77 enclose the Carrier domain; that stretch reads SEIGERVKKI…DATKFLEKNA (76 aa). Ser-37 bears the O-(pantetheine 4'-phosphoryl)serine mark.

It belongs to the acyl carrier protein (ACP) family. 4'-phosphopantetheine is transferred from CoA to a specific serine of apo-ACP by AcpS. This modification is essential for activity because fatty acids are bound in thioester linkage to the sulfhydryl of the prosthetic group.

It localises to the cytoplasm. The protein operates within lipid metabolism; fatty acid biosynthesis. Its function is as follows. Carrier of the growing fatty acid chain in fatty acid biosynthesis. In Rhodopseudomonas palustris (strain HaA2), this protein is Acyl carrier protein.